A 177-amino-acid polypeptide reads, in one-letter code: MVISMKSEKPLVGIIMGSDSDLPVMKEAARILEEFGVPYEITIISAHRTPERAYEYAKKAEERGIEVIIAGAGGAAHLPGIIASLTVLPVIGVPIKSKALNGLDSLLSIVQMPSGIPVATVAIDNAKNAALLALRILGIKYPEIKEKLRRYMKDMKRKVEEKAKRLEEMGWERYLSE.

Residues Ser18, Asp21, and Arg48 each coordinate substrate.

The protein belongs to the AIR carboxylase family. Class I subfamily.

It catalyses the reaction 5-carboxyamino-1-(5-phospho-D-ribosyl)imidazole + H(+) = 5-amino-1-(5-phospho-D-ribosyl)imidazole-4-carboxylate. It functions in the pathway purine metabolism; IMP biosynthesis via de novo pathway; 5-amino-1-(5-phospho-D-ribosyl)imidazole-4-carboxylate from 5-amino-1-(5-phospho-D-ribosyl)imidazole (N5-CAIR route): step 2/2. In terms of biological role, catalyzes the conversion of N5-carboxyaminoimidazole ribonucleotide (N5-CAIR) to 4-carboxy-5-aminoimidazole ribonucleotide (CAIR). This chain is N5-carboxyaminoimidazole ribonucleotide mutase, found in Pyrococcus horikoshii (strain ATCC 700860 / DSM 12428 / JCM 9974 / NBRC 100139 / OT-3).